We begin with the raw amino-acid sequence, 482 residues long: Bifunctional protein GlmU (482 aa).

The tract at residues 1-238 (MSATSPAAVV…HREILGINNR (238 aa)) is pyrophosphorylase. Residues 12–15 (LAAG), Lys26, Gln79, and 84–85 (GT) contribute to the UDP-N-acetyl-alpha-D-glucosamine site. Mg(2+) is bound at residue Asp110. Positions 147, 163, 178, and 236 each coordinate UDP-N-acetyl-alpha-D-glucosamine. Residue Asn236 participates in Mg(2+) binding. Residues 239–259 (LQLAEARRLLNERLLERAMLA) are linker. Residues 260-482 (GVTVVDPAST…ASSQETDGQS (223 aa)) are N-acetyltransferase. Residues Arg341 and Lys359 each contribute to the UDP-N-acetyl-alpha-D-glucosamine site. The Proton acceptor role is filled by His371. Positions 374 and 385 each coordinate UDP-N-acetyl-alpha-D-glucosamine. Acetyl-CoA contacts are provided by residues Ala388, 394–395 (NY), Ser413, Ala431, and Arg448. The disordered stretch occupies residues 458-482 (VARKRPGSAAAQAAQASSQETDGQS). Positions 465–476 (SAAAQAAQASSQ) are enriched in low complexity.

In the N-terminal section; belongs to the N-acetylglucosamine-1-phosphate uridyltransferase family. This sequence in the C-terminal section; belongs to the transferase hexapeptide repeat family. In terms of assembly, homotrimer. Mg(2+) is required as a cofactor.

It localises to the cytoplasm. It catalyses the reaction alpha-D-glucosamine 1-phosphate + acetyl-CoA = N-acetyl-alpha-D-glucosamine 1-phosphate + CoA + H(+). It carries out the reaction N-acetyl-alpha-D-glucosamine 1-phosphate + UTP + H(+) = UDP-N-acetyl-alpha-D-glucosamine + diphosphate. It functions in the pathway nucleotide-sugar biosynthesis; UDP-N-acetyl-alpha-D-glucosamine biosynthesis; N-acetyl-alpha-D-glucosamine 1-phosphate from alpha-D-glucosamine 6-phosphate (route II): step 2/2. It participates in nucleotide-sugar biosynthesis; UDP-N-acetyl-alpha-D-glucosamine biosynthesis; UDP-N-acetyl-alpha-D-glucosamine from N-acetyl-alpha-D-glucosamine 1-phosphate: step 1/1. Its pathway is bacterial outer membrane biogenesis; LPS lipid A biosynthesis. In terms of biological role, catalyzes the last two sequential reactions in the de novo biosynthetic pathway for UDP-N-acetylglucosamine (UDP-GlcNAc). The C-terminal domain catalyzes the transfer of acetyl group from acetyl coenzyme A to glucosamine-1-phosphate (GlcN-1-P) to produce N-acetylglucosamine-1-phosphate (GlcNAc-1-P), which is converted into UDP-GlcNAc by the transfer of uridine 5-monophosphate (from uridine 5-triphosphate), a reaction catalyzed by the N-terminal domain. The sequence is that of Bifunctional protein GlmU from Streptomyces griseus subsp. griseus (strain JCM 4626 / CBS 651.72 / NBRC 13350 / KCC S-0626 / ISP 5235).